The primary structure comprises 28 residues: Mu-theraphotoxin-Hsp1a (28 aa).

3 cysteine pairs are disulfide-bonded: Cys2–Cys16, Cys9–Cys21, and Cys15–Cys25. Position 28 is an asparagine amide (Asn28).

Belongs to the neurotoxin 30 (phrixotoxin) family. As to expression, expressed by the venom gland.

The protein resides in the secreted. Functionally, potent and selective inhibitor of Nav1.7/SCN9A sodium channels. Inhibits Nav1.7/SCN9A peak current (IC(50)=13 nM). In vivo, does not induce visible signs of toxicity when intravenously injected into mice. This Homoeomma sp. (Peruvian tarantula) protein is Mu-theraphotoxin-Hsp1a.